We begin with the raw amino-acid sequence, 267 residues long: Indole-3-glycerol phosphate synthase (267 aa).

The protein belongs to the TrpC family.

The enzyme catalyses 1-(2-carboxyphenylamino)-1-deoxy-D-ribulose 5-phosphate + H(+) = (1S,2R)-1-C-(indol-3-yl)glycerol 3-phosphate + CO2 + H2O. It participates in amino-acid biosynthesis; L-tryptophan biosynthesis; L-tryptophan from chorismate: step 4/5. This chain is Indole-3-glycerol phosphate synthase, found in Polynucleobacter asymbioticus (strain DSM 18221 / CIP 109841 / QLW-P1DMWA-1) (Polynucleobacter necessarius subsp. asymbioticus).